The sequence spans 138 residues: Small ribosomal subunit protein uS8c (138 aa).

Belongs to the universal ribosomal protein uS8 family. In terms of assembly, part of the 30S ribosomal subunit.

It is found in the plastid. Its subcellular location is the chloroplast. Its function is as follows. One of the primary rRNA binding proteins, it binds directly to 16S rRNA central domain where it helps coordinate assembly of the platform of the 30S subunit. This is Small ribosomal subunit protein uS8c (rps8) from Chlorella vulgaris (Green alga).